A 294-amino-acid polypeptide reads, in one-letter code: Glyceraldehyde-3-phosphate dehydrogenase (294 aa).

Positions 19, 63, and 105 each coordinate NAD(+). D-glyceraldehyde 3-phosphate contacts are provided by residues 134–136 (SCT) and T165. C135 acts as the Nucleophile in catalysis. The tract at residues 169 to 188 (KTVDGPSHKDWRGGRGASQN) is disordered. Residues 194–195 (TG) and R217 contribute to the D-glyceraldehyde 3-phosphate site.

This sequence belongs to the glyceraldehyde-3-phosphate dehydrogenase family. In terms of assembly, homotetramer.

The protein localises to the cytoplasm. The enzyme catalyses D-glyceraldehyde 3-phosphate + phosphate + NAD(+) = (2R)-3-phospho-glyceroyl phosphate + NADH + H(+). It participates in carbohydrate degradation; glycolysis; pyruvate from D-glyceraldehyde 3-phosphate: step 1/5. Functionally, catalyzes the oxidative phosphorylation of glyceraldehyde 3-phosphate (G3P) to 1,3-bisphosphoglycerate (BPG) using the cofactor NAD. The first reaction step involves the formation of a hemiacetal intermediate between G3P and a cysteine residue, and this hemiacetal intermediate is then oxidized to a thioester, with concomitant reduction of NAD to NADH. The reduced NADH is then exchanged with the second NAD, and the thioester is attacked by a nucleophilic inorganic phosphate to produce BPG. This Citrobacter freundii protein is Glyceraldehyde-3-phosphate dehydrogenase (gap).